Consider the following 398-residue polypeptide: Tryptophan synthase beta chain (398 aa).

N6-(pyridoxal phosphate)lysine is present on lysine 88.

This sequence belongs to the TrpB family. Tetramer of two alpha and two beta chains. Pyridoxal 5'-phosphate serves as cofactor.

It catalyses the reaction (1S,2R)-1-C-(indol-3-yl)glycerol 3-phosphate + L-serine = D-glyceraldehyde 3-phosphate + L-tryptophan + H2O. It functions in the pathway amino-acid biosynthesis; L-tryptophan biosynthesis; L-tryptophan from chorismate: step 5/5. Functionally, the beta subunit is responsible for the synthesis of L-tryptophan from indole and L-serine. This Mannheimia succiniciproducens (strain KCTC 0769BP / MBEL55E) protein is Tryptophan synthase beta chain.